Reading from the N-terminus, the 194-residue chain is Peptidyl-tRNA hydrolase (194 aa).

Tyr16 serves as a coordination point for tRNA. The active-site Proton acceptor is His21. 3 residues coordinate tRNA: Phe67, Asn69, and Asn115.

It belongs to the PTH family. As to quaternary structure, monomer.

It localises to the cytoplasm. It carries out the reaction an N-acyl-L-alpha-aminoacyl-tRNA + H2O = an N-acyl-L-amino acid + a tRNA + H(+). Hydrolyzes ribosome-free peptidyl-tRNAs (with 1 or more amino acids incorporated), which drop off the ribosome during protein synthesis, or as a result of ribosome stalling. Its function is as follows. Catalyzes the release of premature peptidyl moieties from peptidyl-tRNA molecules trapped in stalled 50S ribosomal subunits, and thus maintains levels of free tRNAs and 50S ribosomes. The chain is Peptidyl-tRNA hydrolase from Sodalis glossinidius (strain morsitans).